A 667-amino-acid chain; its full sequence is Gamma-tubulin complex component 4 (667 aa).

The tract at residues 425 to 445 (HKADATQAREGPSRETSPREA) is disordered.

It belongs to the TUBGCP family. In terms of assembly, component of the gamma-tubulin ring complex (gTuRC) consisting of TUBGCP2, TUBGCP3, TUBGCP4, TUBGCP5 and TUBGCP6 and gamma-tubulin TUBG1 or TUBG2. TUBGCP2, TUBGCP3, TUBGCP4, TUBGCP5 and TUBGCP6 assemble in a 5:5:2:1:1 stoichiometry; each is associated with a gamma-tubulin, thereby arranging 14 gamma-tubulins in a helical manner. Gamma-tubulin at the first position is blocked by TUBGCP3 at the last position, allowing 13 protafilaments to grow into a microtubule. The gTuRC (via TUBGCP3 and TUBGCP6) interacts with ACTB and MZT1; the interactions form a luminal bridge that stabilizes the initial structure during complex assembly. The gTuRC (via TUBGCP2) interacts with MZT2A/MZT2B and CDK5RAP2 (via CM1 motif); the interactions play a role in gTuRC activation. Interacts with NINL. Interacts with ATF5; the ATF5:PCNT:polyglutamylated tubulin (PGT) tripartite unites the mother centriole and the pericentriolar material (PCM) in the centrosome. In terms of tissue distribution, ubiquitously expressed.

It is found in the cytoplasm. The protein resides in the cytoskeleton. Its subcellular location is the microtubule organizing center. The protein localises to the centrosome. In terms of biological role, component of the gamma-tubulin ring complex (gTuRC) which mediates microtubule nucleation. The gTuRC regulates the minus-end nucleation of alpha-beta tubulin heterodimers that grow into microtubule protafilaments, a critical step in centrosome duplication and spindle formation. This is Gamma-tubulin complex component 4 (TUBGCP4) from Homo sapiens (Human).